We begin with the raw amino-acid sequence, 195 residues long: dITP/XTP pyrophosphatase (195 aa).

Residue 8–13 (TNNQGK) participates in substrate binding. Mg(2+) is bound by residues E39 and D68. D68 acts as the Proton acceptor in catalysis. Substrate-binding positions include S69, 149–152 (FGYD), K172, and 177–178 (HR).

The protein belongs to the HAM1 NTPase family. As to quaternary structure, homodimer. Mg(2+) is required as a cofactor.

It carries out the reaction XTP + H2O = XMP + diphosphate + H(+). It catalyses the reaction dITP + H2O = dIMP + diphosphate + H(+). The enzyme catalyses ITP + H2O = IMP + diphosphate + H(+). Its function is as follows. Pyrophosphatase that catalyzes the hydrolysis of nucleoside triphosphates to their monophosphate derivatives, with a high preference for the non-canonical purine nucleotides XTP (xanthosine triphosphate), dITP (deoxyinosine triphosphate) and ITP. Seems to function as a house-cleaning enzyme that removes non-canonical purine nucleotides from the nucleotide pool, thus preventing their incorporation into DNA/RNA and avoiding chromosomal lesions. The chain is dITP/XTP pyrophosphatase from Staphylococcus epidermidis (strain ATCC 12228 / FDA PCI 1200).